Consider the following 147-residue polypeptide: Protein OPG060 (147 aa).

It belongs to the orthopoxvirus OPG058 family.

The polypeptide is Protein OPG060 (OPG060) (Bos taurus (Bovine)).